Here is a 218-residue protein sequence, read N- to C-terminus: Large ribosomal subunit protein uL3 (218 aa).

This sequence belongs to the universal ribosomal protein uL3 family. Part of the 50S ribosomal subunit. Forms a cluster with proteins L14 and L19.

Functionally, one of the primary rRNA binding proteins, it binds directly near the 3'-end of the 23S rRNA, where it nucleates assembly of the 50S subunit. In Corynebacterium glutamicum (strain R), this protein is Large ribosomal subunit protein uL3.